A 275-amino-acid chain; its full sequence is Formamidopyrimidine-DNA glycosylase (275 aa).

P2 acts as the Schiff-base intermediate with DNA in catalysis. The active-site Proton donor is the E3. K58 serves as the catalytic Proton donor; for beta-elimination activity. Positions 91 and 110 each coordinate DNA. The FPG-type zinc-finger motif lies at 238-272 (QVYGQTGKPCPRCGQAIVKLKVGGRGTHICPKCQK). R262 acts as the Proton donor; for delta-elimination activity in catalysis.

Belongs to the FPG family. As to quaternary structure, monomer. It depends on Zn(2+) as a cofactor.

It catalyses the reaction Hydrolysis of DNA containing ring-opened 7-methylguanine residues, releasing 2,6-diamino-4-hydroxy-5-(N-methyl)formamidopyrimidine.. The enzyme catalyses 2'-deoxyribonucleotide-(2'-deoxyribose 5'-phosphate)-2'-deoxyribonucleotide-DNA = a 3'-end 2'-deoxyribonucleotide-(2,3-dehydro-2,3-deoxyribose 5'-phosphate)-DNA + a 5'-end 5'-phospho-2'-deoxyribonucleoside-DNA + H(+). Involved in base excision repair of DNA damaged by oxidation or by mutagenic agents. Acts as a DNA glycosylase that recognizes and removes damaged bases. Has a preference for oxidized purines, such as 7,8-dihydro-8-oxoguanine (8-oxoG). Has AP (apurinic/apyrimidinic) lyase activity and introduces nicks in the DNA strand. Cleaves the DNA backbone by beta-delta elimination to generate a single-strand break at the site of the removed base with both 3'- and 5'-phosphates. The sequence is that of Formamidopyrimidine-DNA glycosylase from Streptococcus pyogenes serotype M18 (strain MGAS8232).